We begin with the raw amino-acid sequence, 318 residues long: Malate dehydrogenase (318 aa).

Residues 10–15 (GGGQIG) and Asp-34 each bind NAD(+). Substrate contacts are provided by Arg-83 and Arg-89. NAD(+)-binding positions include Asn-96 and 119-121 (LSN). Substrate is bound by residues Asn-121 and Arg-152. The active-site Proton acceptor is the His-176.

This sequence belongs to the LDH/MDH superfamily. MDH type 3 family.

It carries out the reaction (S)-malate + NAD(+) = oxaloacetate + NADH + H(+). In terms of biological role, catalyzes the reversible oxidation of malate to oxaloacetate. This chain is Malate dehydrogenase, found in Syntrophotalea carbinolica (strain DSM 2380 / NBRC 103641 / GraBd1) (Pelobacter carbinolicus).